A 147-amino-acid chain; its full sequence is Transmembrane protein 210 (147 aa).

Positions 1–31 (MAPGPWPVSCLRGGPLGLTYLSLLLIPAAAG) are cleaved as a signal peptide. At 32-47 (TYCECSLGLSREALIA) the chain is on the extracellular side. The helical transmembrane segment at 48 to 68 (LLVVLAGISASCFCALVIVAI) threads the bilayer. The Cytoplasmic portion of the chain corresponds to 69 to 147 (GVLRAKGETC…PPPPPPLPPE (79 aa)). Residues 128–147 (AIPMEASSEEPPPPPPLPPE) form a disordered region. Over residues 137–147 (EPPPPPPLPPE) the composition is skewed to pro residues.

The protein localises to the membrane. It is found in the cytoplasmic vesicle. It localises to the secretory vesicle. The protein resides in the acrosome. The sequence is that of Transmembrane protein 210 (TMEM210) from Homo sapiens (Human).